Reading from the N-terminus, the 638-residue chain is Golgin subfamily A member 8S (638 aa).

The span at 1–11 (MWPQARLPPHP) shows a compositional bias: pro residues. The disordered stretch occupies residues 1 to 84 (MWPQARLPPH…GESPTSSATL (84 aa)). Residues 50 to 62 (TNGSIHETATSGG) show a composition bias toward polar residues. Coiled coils occupy residues 105-160 (VSQL…LNTD), 223-275 (LEQS…MSQE), and 318-417 (EAEL…QQKQ). Disordered regions lie at residues 427-453 (ALPG…PSIP), 510-532 (KDAA…DEAA), and 556-575 (AHNP…ELGA). A compositionally biased stretch (basic and acidic residues) spans 434 to 446 (GGGHLDSEGEEAP). Gly residues predominate over residues 514 to 525 (LGGGHHQAGAQG). The span at 561-574 (DEPGPGAPAPQELG) shows a compositional bias: low complexity.

It belongs to the GOLGA8 family.

In Homo sapiens (Human), this protein is Golgin subfamily A member 8S.